Reading from the N-terminus, the 326-residue chain is MSKHITEEQRYAISMMLQIPMSKKAIAEAIGVDKSTVYREIKRNCDARSGSYSMELAQRKADRRKQQKHRKEVLTPAMRKRIIKLLKKGFSPEQIVGRSRLEGIAMVSHETIYRWIWEDKRRGGKLHKYLRRQGRRYAKRGSKNAGRGFIPGRVDIDERPEIVELKERFGDLEIDTIIGKNHKGAILTINDRATSRVWIRKLSGKEAIPVAKIAVWALRKVKNLIHTITADNGKEFAKHEEIAQKLEIKFYFCKPYHSWERGANENTNGLIRQYIPKGKDFSEVTNKQIKWIENKLNNRPRKRLGYLTPNEKFKQIINQNSVAFAS.

The Integrase catalytic domain occupies 156-317; it reads IDERPEIVEL…TPNEKFKQII (162 aa).

The protein belongs to the transposase IS30 family.

Required for the transposition of the insertion element. The chain is Transposase for insertion sequence element IS4351 from Bacteroides fragilis.